The chain runs to 468 residues: MSTGKIAQVVGPVVDVAFATDDKLPEINNALVVYKDGDKSQRIVLEVALELGDGLVRTIAMESTDGLTRGLEVFDTGRAISVPVGKETLGRVFNVLGDTIDLDKPFAEDAERQPIHKKAPSFDDLSTSTEILETGIKVIDLLAPYLKGGKVGLFGGAGVGKTVLIQELIHNIAQEHGGISVFTGVGERTREGNDLYWEMKESGVIEKTAMVFGQMNEPPGARMRVALTGLTIAEYFRDVEGQDVLLFIDNIFRFTQAGSEVSALLGRMPSAVGYQPTLATEMGQLQERITSTKKGSVTSIQAIYVPADDYTDPAPATAFAHLDSTTNLERRLTQMGIYPAVDPLASSSRALSPEIVGQEHYDVATEVQHVLQRYRELQDIIAILGMDELSDEEKTLVGRARRIQFFLSQNFNVAEQFTGQPGSYVPVAETVRGFKEILEGKYDELPEDAFRSVGAIEDVVEKAKNMGV.

155–162 (GGAGVGKT) is an ATP binding site.

Belongs to the ATPase alpha/beta chains family. F-type ATPases have 2 components, CF(1) - the catalytic core - and CF(0) - the membrane proton channel. CF(1) has five subunits: alpha(3), beta(3), gamma(1), delta(1), epsilon(1). CF(0) has three main subunits: a(1), b(2) and c(9-12). The alpha and beta chains form an alternating ring which encloses part of the gamma chain. CF(1) is attached to CF(0) by a central stalk formed by the gamma and epsilon chains, while a peripheral stalk is formed by the delta and b chains.

It localises to the cell membrane. The enzyme catalyses ATP + H2O + 4 H(+)(in) = ADP + phosphate + 5 H(+)(out). Produces ATP from ADP in the presence of a proton gradient across the membrane. The catalytic sites are hosted primarily by the beta subunits. This is ATP synthase subunit beta from Streptococcus mutans serotype c (strain ATCC 700610 / UA159).